The following is a 231-amino-acid chain: MKIGIIGAMDEEVSILKAKLNNMETTIIAGCEFYQGELNGKQVILTKSGIGKVAAAVATTLLLERFNPGQVINTGSAGGYDTTLNVGDIVISTEVRFHDVDLTAFGYEIGQMAQLPAAFPADKNLIFAAQKAAETITHLKTIQGLICTGDIFMADPTKAEIARHNFPTMAACEMEAAAIAQVCYQFKVPFVIIRSLSDIAGKKSELSFEQYLPIAAKNASILVEEIINNLN.

Glu12 functions as the Proton acceptor in the catalytic mechanism. Residues Gly78, Met153, and 174-175 (ME) contribute to the substrate site. Catalysis depends on Asp198, which acts as the Proton donor.

It belongs to the PNP/UDP phosphorylase family. MtnN subfamily.

The enzyme catalyses S-adenosyl-L-homocysteine + H2O = S-(5-deoxy-D-ribos-5-yl)-L-homocysteine + adenine. It carries out the reaction S-methyl-5'-thioadenosine + H2O = 5-(methylsulfanyl)-D-ribose + adenine. The catalysed reaction is 5'-deoxyadenosine + H2O = 5-deoxy-D-ribose + adenine. It functions in the pathway amino-acid biosynthesis; L-methionine biosynthesis via salvage pathway; S-methyl-5-thio-alpha-D-ribose 1-phosphate from S-methyl-5'-thioadenosine (hydrolase route): step 1/2. Functionally, catalyzes the irreversible cleavage of the glycosidic bond in both 5'-methylthioadenosine (MTA) and S-adenosylhomocysteine (SAH/AdoHcy) to adenine and the corresponding thioribose, 5'-methylthioribose and S-ribosylhomocysteine, respectively. Also cleaves 5'-deoxyadenosine, a toxic by-product of radical S-adenosylmethionine (SAM) enzymes, into 5-deoxyribose and adenine. This chain is 5'-methylthioadenosine/S-adenosylhomocysteine nucleosidase, found in Psychromonas ingrahamii (strain DSM 17664 / CCUG 51855 / 37).